A 648-amino-acid chain; its full sequence is Replication protein E1 (648 aa).

Positions 83 to 85 (KRK) match the Nuclear localization signal motif. 3 positions are modified to phosphoserine; by host: S89, S93, and S107. The Nuclear export signal signature appears at 106 to 115 (ISPRLNAIQL). The segment at 153 to 188 (HGEPENGCGGGGHGRDKEGEGQVHTEVHTESEIEHH) is disordered. A compositionally biased stretch (basic and acidic residues) spans 165–188 (HGRDKEGEGQVHTEVHTESEIEHH). Residues 186–352 (EHHTGTTRVL…QTIVEHGLAD (167 aa)) form a DNA-binding region region. One can recognise an SF3 helicase domain in the interval 451–601 (IEFISFLSKL…FPFDRNGNAV (151 aa)). 477 to 484 (GPPDTGKS) contacts ATP. K558 is covalently cross-linked (Glycyl lysine isopeptide (Lys-Gly) (interchain with G-Cter in SUMO)).

The protein belongs to the papillomaviridae E1 protein family. Can form hexamers. Interacts with E2 protein; this interaction increases E1 DNA binding specificity. Interacts with host DNA polymerase subunit POLA2. Interacts with host single stranded DNA-binding protein RPA1. Interacts with host TOP1; this interaction stimulates the enzymatic activity of TOP1. Phosphorylated. Post-translationally, sumoylated.

Its subcellular location is the host nucleus. It catalyses the reaction Couples ATP hydrolysis with the unwinding of duplex DNA by translocating in the 3'-5' direction.. The enzyme catalyses ATP + H2O = ADP + phosphate + H(+). Its function is as follows. ATP-dependent DNA 3'-5' helicase required for initiation of viral DNA replication. It forms a complex with the viral E2 protein. The E1-E2 complex binds to the replication origin which contains binding sites for both proteins. During the initial step, a dimer of E1 interacts with a dimer of protein E2 leading to a complex that binds the viral origin of replication with high specificity. Then, a second dimer of E1 displaces the E2 dimer in an ATP-dependent manner to form the E1 tetramer. Following this, two E1 monomers are added to each half of the site, which results in the formation of two E1 trimers on the viral ori. Subsequently, two hexamers will be created. The double hexamer acts as a bi-directional helicase machinery and unwinds the viral DNA and then recruits the host DNA polymerase to start replication. This chain is Replication protein E1, found in Pan paniscus (Pygmy chimpanzee).